The chain runs to 674 residues: ATP-dependent DNA helicase Hel308 (674 aa).

Residues Gln-27 and 44–51 (VPTAAGKT) each bind ATP. Positions 31–197 (IEQIRKGRNV…WLDASLIKSD (167 aa)) constitute a Helicase ATP-binding domain. The DEAH box motif lies at 142-145 (DEIH). Positions 224–411 (SINQIIRETV…EAKVRFNTLA (188 aa)) constitute a Helicase C-terminal domain.

The protein belongs to the helicase family. Hel308 subfamily. Monomer.

The catalysed reaction is Couples ATP hydrolysis with the unwinding of duplex DNA by translocating in the 3'-5' direction.. It catalyses the reaction ATP + H2O = ADP + phosphate + H(+). Its function is as follows. DNA-dependent ATPase and 3'-5' DNA helicase that may be involved in repair of stalled replication forks. The chain is ATP-dependent DNA helicase Hel308 from Thermoplasma acidophilum (strain ATCC 25905 / DSM 1728 / JCM 9062 / NBRC 15155 / AMRC-C165).